The sequence spans 358 residues: Homoserine O-succinyltransferase (358 aa).

Cysteine 146 (acyl-thioester intermediate) is an active-site residue. Residues lysine 167 and serine 196 each contribute to the substrate site. Histidine 239 (proton acceptor) is an active-site residue. Residue glutamate 241 is part of the active site. Position 253 (arginine 253) interacts with substrate.

Belongs to the MetA family.

The protein localises to the cytoplasm. It carries out the reaction L-homoserine + succinyl-CoA = O-succinyl-L-homoserine + CoA. It functions in the pathway amino-acid biosynthesis; L-methionine biosynthesis via de novo pathway; O-succinyl-L-homoserine from L-homoserine: step 1/1. Transfers a succinyl group from succinyl-CoA to L-homoserine, forming succinyl-L-homoserine. The protein is Homoserine O-succinyltransferase of Nitrosococcus oceani (strain ATCC 19707 / BCRC 17464 / JCM 30415 / NCIMB 11848 / C-107).